The following is a 664-amino-acid chain: Intraflagellar transport protein 70A2 (664 aa).

7 TPR repeats span residues 11–44 (DGEFTAVVYRLIRDSRYSEAVQLLSAELQRSPRS), 45–78 (RAGLSLLAYCYYRLQEFELAAECYEQLSQMHPEL), 153–186 (PDGLVNMGCLLYKEGHYEAACSKFFAALQASGYQ), 188–220 (DVSYNLALACYSNRHYAPALKHIANIIERGIRQ), 395–423 (QVQEARHNRDDEVVIKAVNEYDETLEKYI), 424–456 (PVLMAQAKIYWNLENYQMVEKIFRKSVEFCNDH), and 458–491 (VWKLNVAHVLFMQENKYKEAIGFYEPIVKKNYDN). Positions 507-534 (YIMTSQNEEAEELMRKIEKEEEQLSYGD) form a coiled coil. Residues 543–576 (CIVNLVIGTLYCAKGNYDFGISRVIKSLEPYHKK) form a TPR 8 repeat.

This sequence belongs to the TTC30/dfy-1/fleer family. As to quaternary structure, interacts wit the IFT B complex component IFT52.

It is found in the cell projection. The protein localises to the cilium. Functionally, required for polyglutamylation of axonemal tubulin. Plays a role in anterograde intraflagellar transport (IFT), the process by which cilia precursors are transported from the base of the cilium to the site of their incorporation at the tip. The polypeptide is Intraflagellar transport protein 70A2 (Ift70a2) (Rattus norvegicus (Rat)).